The chain runs to 408 residues: Aurora kinase A-B (408 aa).

Basic and acidic residues predominate over residues 1 to 10; the sequence is MERAVKENHK. The tract at residues 1–128 is disordered; that stretch reads MERAVKENHK…QGKTLAVPKE (128 aa). Residues 85-110 show a composition bias toward polar residues; the sequence is GHQTSKPQGPNENRNPQQTSHSSTPN. The region spanning 140 to 390 is the Protein kinase domain; sequence FEIGRPLGKG…LKGVLEHPWI (251 aa). ATP-binding positions include Lys-150, Lys-169, and 217 to 220; that span reads LDYA. Asp-263 functions as the Proton acceptor in the catalytic mechanism. Asp-281 is a binding site for ATP. Residues 287–300 are activation segment; the sequence is HAPSSRRTTLCGTL.

The protein belongs to the protein kinase superfamily. Ser/Thr protein kinase family. Aurora subfamily. Interacts with kif2c and kif11. In terms of processing, phosphorylated. Autophosphorylated on a serine residue.

The protein resides in the cytoplasm. It is found in the cytoskeleton. It localises to the spindle pole. The protein localises to the microtubule organizing center. Its subcellular location is the centrosome. The catalysed reaction is L-seryl-[protein] + ATP = O-phospho-L-seryl-[protein] + ADP + H(+). The enzyme catalyses L-threonyl-[protein] + ATP = O-phospho-L-threonyl-[protein] + ADP + H(+). In terms of biological role, mitotic serine/threonine kinases that contributes to the regulation of cell cycle progression. Associates with the centrosome and the spindle microtubules during mitosis and plays a critical role in various mitotic events including the establishment of mitotic spindle, centrosome duplication, centrosome separation as well as maturation, chromosomal alignment, spindle assembly checkpoint, and cytokinesis. Phosphorylates numerous target proteins. Important for microtubule formation and/or stabilization. In Xenopus laevis (African clawed frog), this protein is Aurora kinase A-B (aurka-b).